We begin with the raw amino-acid sequence, 151 residues long: Transcriptional repressor NrdR (151 aa).

The disordered stretch occupies residues 1 to 21 (MRCPFCGEADTQVKDSRPTED). A zinc finger spans residues 3–34 (CPFCGEADTQVKDSRPTEDGAAIRRRRFCPQC). Positions 11–21 (TQVKDSRPTED) are enriched in basic and acidic residues. The ATP-cone domain occupies 49-139 (LVVVKADQRR…VYRDFREAKD (91 aa)).

Belongs to the NrdR family. It depends on Zn(2+) as a cofactor.

Functionally, negatively regulates transcription of bacterial ribonucleotide reductase nrd genes and operons by binding to NrdR-boxes. The sequence is that of Transcriptional repressor NrdR from Acidiphilium cryptum (strain JF-5).